We begin with the raw amino-acid sequence, 365 residues long: Probable 7-methylxanthine methyltransferase PCS2 (365 aa).

Tyr-19 provides a ligand contact to S-adenosyl-L-homocysteine. Thr-26 serves as a coordination point for theobromine. S-adenosyl-L-homocysteine contacts are provided by Cys-62, Asp-99, Leu-100, Ser-134, and Phe-135. 3 residues coordinate theobromine: Tyr-152, His-155, and Trp-156. A Mg(2+)-binding site is contributed by Asn-173. Arg-221 contributes to the theobromine binding site. Asp-259, Phe-261, and Asn-262 together coordinate Mg(2+).

This sequence belongs to the methyltransferase superfamily. Type-7 methyltransferase family. Mg(2+) serves as cofactor.

It carries out the reaction 7-methylxanthine + S-adenosyl-L-methionine = theobromine + S-adenosyl-L-homocysteine + H(+). Its function is as follows. No detectable N-methyltransferase activity. In Camellia ptilophylla (Cocoa tea), this protein is Probable 7-methylxanthine methyltransferase PCS2.